The primary structure comprises 521 residues: MFESLSNRLTGVIQGLRGKGRLTDADIEATTREIRLALFEADVSLPVVRAFVHRIKERARGTEVSAALNPAQQIVKIVNEELIGILGGETRQLAFAKTPPTVVMLAGLQGSGKTTLAGKLAVRLRRQGHTPLLVACDLQRPAAVNQLQVVGERAGVPVFAPHPGASPDSGPGDPVAVASAGLVEARAKHFDVVIVDTAGRLGIDDELMAQAGAIREAINPDEVLFVLDAMIGQDAVTTAAAFGAGVGFTGVVLTKLDGDARGGAALSVREVTGVPILFATTGEKLDDFDVFHPDRMASRILGMGDVLSLIEQAEQVFDAEQAEAAAAKIVAGELTLEDFLEQMLAVRKMGLIGNLLGMLPGAGQVKEVLEQVDDKQLDRLQAIIRGMTPQERADPKIINASRRLRIANGSGVTVSEVNQLVDRFFEARKMMSSVLGGMGIPGMGRKSATRKSKGGKGKKRARGPTSPKVRSPFGPARPGMPDMMNMPPSFPDLSQMPDGLNELPPGLAAFDLSKLKFPGKT.

GTP contacts are provided by residues 107-114, 196-200, and 254-257; these read GLQGSGKT, DTAGR, and TKLD. The tract at residues 436 to 505 is disordered; the sequence is GGMGIPGMGR…MPDGLNELPP (70 aa). A compositionally biased stretch (basic residues) spans 447–462; sequence SATRKSKGGKGKKRAR.

This sequence belongs to the GTP-binding SRP family. SRP54 subfamily. In terms of assembly, part of the signal recognition particle protein translocation system, which is composed of SRP and FtsY.

The protein localises to the cytoplasm. The catalysed reaction is GTP + H2O = GDP + phosphate + H(+). In terms of biological role, involved in targeting and insertion of nascent membrane proteins into the cytoplasmic membrane. Binds to the hydrophobic signal sequence of the ribosome-nascent chain (RNC) as it emerges from the ribosomes. The SRP-RNC complex is then targeted to the cytoplasmic membrane where it interacts with the SRP receptor FtsY. This is Signal recognition particle protein from Mycobacterium leprae (strain TN).